A 45-amino-acid polypeptide reads, in one-letter code: MIVAIMVMNAKGVSEVVGTLMAVLITFALVAVVFNFITAATVKNT.

The helical transmembrane segment at Glu-15–Ile-37 threads the bilayer.

The protein resides in the membrane. This is an uncharacterized protein from Archaeoglobus fulgidus (strain ATCC 49558 / DSM 4304 / JCM 9628 / NBRC 100126 / VC-16).